A 959-amino-acid chain; its full sequence is Isoleucine--tRNA ligase (959 aa).

Residues 66–76 (PYANGDIHIGH) carry the 'HIGH' region motif. E592 serves as a coordination point for L-isoleucyl-5'-AMP. Residues 633–637 (KMSKS) carry the 'KMSKS' region motif. K636 is an ATP binding site. Residues C922, C925, C942, and C945 each coordinate Zn(2+).

The protein belongs to the class-I aminoacyl-tRNA synthetase family. IleS type 1 subfamily. As to quaternary structure, monomer. Zn(2+) serves as cofactor.

It is found in the cytoplasm. The enzyme catalyses tRNA(Ile) + L-isoleucine + ATP = L-isoleucyl-tRNA(Ile) + AMP + diphosphate. Its function is as follows. Catalyzes the attachment of isoleucine to tRNA(Ile). As IleRS can inadvertently accommodate and process structurally similar amino acids such as valine, to avoid such errors it has two additional distinct tRNA(Ile)-dependent editing activities. One activity is designated as 'pretransfer' editing and involves the hydrolysis of activated Val-AMP. The other activity is designated 'posttransfer' editing and involves deacylation of mischarged Val-tRNA(Ile). The chain is Isoleucine--tRNA ligase from Cupriavidus metallidurans (strain ATCC 43123 / DSM 2839 / NBRC 102507 / CH34) (Ralstonia metallidurans).